Here is a 281-residue protein sequence, read N- to C-terminus: NAD kinase (281 aa).

The active-site Proton acceptor is the D61. NAD(+) contacts are provided by residues 61 to 62 (DG), 134 to 135 (ND), R145, D164, 175 to 180 (TAYSLS), and Q234.

This sequence belongs to the NAD kinase family. A divalent metal cation is required as a cofactor.

The protein localises to the cytoplasm. It carries out the reaction NAD(+) + ATP = ADP + NADP(+) + H(+). Involved in the regulation of the intracellular balance of NAD and NADP, and is a key enzyme in the biosynthesis of NADP. Catalyzes specifically the phosphorylation on 2'-hydroxyl of the adenosine moiety of NAD to yield NADP. This Clostridium botulinum (strain ATCC 19397 / Type A) protein is NAD kinase.